A 765-amino-acid chain; its full sequence is Zinc metalloproteinase nas-37 (765 aa).

An N-terminal signal peptide occupies residues Met-1–Thr-22. Residues Ala-23–Arg-114 constitute a propeptide that is removed on maturation. Residues Gln-115–Ser-308 form the Peptidase M12A domain. The N-linked (GlcNAc...) asparagine glycan is linked to Asn-126. Intrachain disulfides connect Cys-156-Cys-307, Cys-177-Cys-196, Cys-311-Cys-331, Cys-333-Cys-342, Cys-350-Cys-374, and Cys-400-Cys-420. His-204 provides a ligand contact to Zn(2+). The active site involves Glu-205. Positions 208 and 214 each coordinate Zn(2+). Positions Asn-303 to Glu-343 constitute an EGF-like domain. In terms of domain architecture, CUB spans Cys-350–Ile-458. Residues Lys-513 to Ala-573 are disordered. Low complexity-rich tracts occupy residues Leu-526–Pro-545 and Ala-562–Ala-573. The TSP type-1 domain occupies Thr-576–Ala-627. Intrachain disulfides connect Cys-588/Cys-621, Cys-592/Cys-626, and Cys-604/Cys-611.

Zn(2+) serves as cofactor. In terms of tissue distribution, expressed in hypodermal cells. Not expressed in the seam cells in L1 to L3 larvae, but it is present in seam cells of L4 larvae. Also expressed in attachment points of the cuticle at the anterior end of larvae, in the arcade cells in the mouth, the anterior pharynx, the amphid socket cells, and in the rectal epithelial cells at the posterior end of the larvae (at protein level).

Its subcellular location is the secreted. Its function is as follows. Metalloprotease. Plays an essential role in molting, a process during larval stages in which a new cuticle is formed and the old cuticle is shed. Required during ecdysis, the opening of the cuticle to allow the worm to escape. The protein is Zinc metalloproteinase nas-37 (nas-37) of Caenorhabditis elegans.